The sequence spans 359 residues: MPKQIEPVALDDAGSALVIVDQTLIPNETRYLRLTTPEETWEAIRSLRVRGAPAIGIAAAMGLYLGVKGSEAADFEDFYHEFRQVKAYLASARPTAVNLFWALDRMEACLLRHRDRPIPEIKEALRAEAEAIREEDARANRTIGEYALSLLKPGMGILTHCNAGALATAAYGTALAPIYLGQERGYNFRVFADETRPLLQGARLTAYELMQAGVDVTLICDNMASAVMKNGWVDAVFVGCDRVAANGDTANKIGTSGVAILARHYGIPFYVCAPTSTIDLRCPTGADIVIEERRPEEVTEQWYAKRMAPEGVKVYNPAFDVTDADLITAIITEYGIARPPYTESLKELFRRKEEAERRA.

Residues 50 to 52 (RGA), Arg93, and Gln200 contribute to the substrate site. The Proton donor role is filled by Asp241. 251–252 (NK) contacts substrate.

The protein belongs to the eIF-2B alpha/beta/delta subunits family. MtnA subfamily.

It catalyses the reaction 5-(methylsulfanyl)-alpha-D-ribose 1-phosphate = 5-(methylsulfanyl)-D-ribulose 1-phosphate. The protein operates within amino-acid biosynthesis; L-methionine biosynthesis via salvage pathway; L-methionine from S-methyl-5-thio-alpha-D-ribose 1-phosphate: step 1/6. Functionally, catalyzes the interconversion of methylthioribose-1-phosphate (MTR-1-P) into methylthioribulose-1-phosphate (MTRu-1-P). The sequence is that of Methylthioribose-1-phosphate isomerase from Symbiobacterium thermophilum (strain DSM 24528 / JCM 14929 / IAM 14863 / T).